A 210-amino-acid polypeptide reads, in one-letter code: uncharacterized protein (210 aa).

Positions 1 to 20 are cleaved as a signal peptide; sequence MRVITLSGITLFLLASLASA. Over 21–175 the chain is Lumenal; sequence IELTFKLENQ…YSTVKSTQAR (155 aa). The GOLD domain maps to 32–115; that stretch reads KQCYYLDSFH…DKIVTMEITM (84 aa). A glycan (N-linked (GlcNAc...) asparagine) is linked at Asn165. A helical transmembrane segment spans residues 176–196; sequence IFWFSLAESIMVVALSALQVF. The Cytoplasmic portion of the chain corresponds to 197–210; that stretch reads IVKTFFKRSGRRGV.

Belongs to the EMP24/GP25L family.

It localises to the endoplasmic reticulum membrane. This is an uncharacterized protein from Schizosaccharomyces pombe (strain 972 / ATCC 24843) (Fission yeast).